We begin with the raw amino-acid sequence, 130 residues long: Ribonuclease VapC22 (130 aa).

Residues 4–119 (VLLDSHVAYW…RLVTKDRRLR (116 aa)) enclose the PINc domain. Residues D7 and D97 each coordinate Mg(2+).

It belongs to the PINc/VapC protein family. Mg(2+) is required as a cofactor.

The protein resides in the secreted. Toxic component of a type II toxin-antitoxin (TA) system. An RNase. Upon expression in M.smegmatis inhibits translation and colony formation. Its toxic effect on colony formation is neutralized by coexpression with cognate antitoxin VapB22; the effect on translation has not been tested but is probably neutralized also. In Mycobacterium tuberculosis (strain ATCC 25618 / H37Rv), this protein is Ribonuclease VapC22.